The sequence spans 210 residues: Putative protein-lysine deacylase ABHD14B (210 aa).

N-acetylalanine is present on Ala-2. At Ser-91 the chain carries Phosphoserine. Catalysis depends on charge relay system residues Ser-111, Asp-162, and His-188.

Belongs to the AB hydrolase superfamily. ABHD14 family. In terms of assembly, may interact with TAF1.

Its subcellular location is the cytoplasm. It is found in the nucleus. The catalysed reaction is L-lysyl-[protein] + acetyl-CoA = N(6)-acetyl-L-lysyl-[protein] + CoA + H(+). Its function is as follows. Acts as an atypical protein-lysine deacetylase in vitro. Catalyzes the deacetylation of lysine residues using CoA as substrate, generating acetyl-CoA and the free amine of protein-lysine residues. Additional experiments are however required to confirm the protein-lysine deacetylase activity in vivo. Has hydrolase activity towards various surrogate p-nitrophenyl (pNp) substrates, such as pNp-butyrate, pNp-acetate and pNp-octanoate in vitro, with a strong preference for pNp-acetate. May activate transcription. This chain is Putative protein-lysine deacylase ABHD14B, found in Pongo abelii (Sumatran orangutan).